The primary structure comprises 276 residues: MSLVLAVYGKGGIGKSTTSANISAALALKGAKVLQIGCDPKHDSTFPITGKLQKTVIEALEEVDFHHEELTAEDVIETGFAGIDGLEAGGPPAGSGCGGYVVGESVTLLQELGLYDKYDVILFDVLGDVVCGGFSAPLNYADYAIIIATNDFDSIFAANRLCMAIQQKSVRYKVKLAGIVANRVDYAKGGGTNMLDQFAEKVGTRLLAKVPYHELIRRSRFAGKTLFAMDDSEEGKEECLQPYLQIAEDLLSEAPMSSVPVPIGDREIFEIVGGWQ.

Residues 12-17 and Lys41 each bind ATP; that span reads GIGKST. Mg(2+) is bound at residue Ser16. Positions 97 and 131 each coordinate [4Fe-4S] cluster. 182–183 contributes to the ATP binding site; the sequence is NR.

The protein belongs to the NifH/BchL/ChlL family. As to quaternary structure, homodimer. Protochlorophyllide reductase is composed of three subunits; BchL, BchN and BchB. [4Fe-4S] cluster is required as a cofactor.

The enzyme catalyses chlorophyllide a + oxidized 2[4Fe-4S]-[ferredoxin] + 2 ADP + 2 phosphate = protochlorophyllide a + reduced 2[4Fe-4S]-[ferredoxin] + 2 ATP + 2 H2O. Its pathway is porphyrin-containing compound metabolism; bacteriochlorophyll biosynthesis (light-independent). Functionally, component of the dark-operative protochlorophyllide reductase (DPOR) that uses Mg-ATP and reduced ferredoxin to reduce ring D of protochlorophyllide (Pchlide) to form chlorophyllide a (Chlide). This reaction is light-independent. The L component serves as a unique electron donor to the NB-component of the complex, and binds Mg-ATP. This chain is Light-independent protochlorophyllide reductase iron-sulfur ATP-binding protein, found in Chlorobium luteolum (strain DSM 273 / BCRC 81028 / 2530) (Pelodictyon luteolum).